Consider the following 796-residue polypeptide: Pathogenesis-related homeodomain protein (796 aa).

Disordered stretches follow at residues 34–57 and 80–99; these read KKGK…EELC and VKKT…KVEV. A compositionally biased stretch (basic residues) spans 81–90; that stretch reads KKTRKRKSKR. Residues 190-247 form a PHD-type zinc finger; that stretch reads HIFCAECNSREAFPDNDIILCDGTCNRAFHQKCLDPPLETESIPPGDQGWFCKFCDCK. Disordered regions lie at residues 282–347, 393–422, and 511–736; these read SEAT…STGS, LQEQ…STLV, and NRKT…TEEE. Positions 292 to 303 are enriched in acidic residues; the sequence is WPSDDSKDDDYD. A DNA-binding region (homeobox) is located at residues 452–511; that stretch reads GGRRRMFRLPRNAVEKLRQVFAETELPSKAVRDRLAKELSLDPEKVNKWFKNTRYMALRN. Composition is skewed to polar residues over residues 538 to 547 and 560 to 569; these read ENNTETNEVQ and ATNQNILSPC. Residues 570–580 are compositionally biased toward low complexity; the sequence is NNNQEEFQQEN. Residues 581 to 600 are compositionally biased toward polar residues; the sequence is VSFPSPTDESQQYLEQNDSS. Repeat copies occupy residues 605–631, 632–658, 659–685, and 686–712. The segment at 605–735 is 5 X 27 AA tandem repeats; it reads PHEKQSSEIS…KETGRKMTEE (131 aa). Composition is skewed to basic and acidic residues over residues 624-636, 645-690, and 700-733; these read TESK…HEEL, AAEE…HDEL, and VEEK…RKMT. A 5; truncated repeat occupies 713–735; sequence SHEELSNEMSLEEKETGRKMTEE. A leucine-zipper region spans residues 738–759; that stretch reads LEAVMEMLCRTENKLLDVTQRL.

Belongs to the PHD-associated homeobox family.

The protein localises to the nucleus. In terms of biological role, specifically binds to the fungal elicitor-responsive DNA element, 5'-CTAATTGTTTA-3', of the gene PR2 promoter. The polypeptide is Pathogenesis-related homeodomain protein (PRH) (Arabidopsis thaliana (Mouse-ear cress)).